Consider the following 32-residue polypeptide: GCQKFFWTCHPGQPPCCSGLACTWPTEICIDG.

3 disulfides stabilise this stretch: C2–C17, C9–C22, and C16–C29. An Aspartic acid 1-amide modification is found at D31.

This sequence belongs to the neurotoxin 10 (Hwtx-1) family. 30 (Jztx-14) subfamily. Post-translationally, amidated as well as non-amidated forms are found in the venom. As to expression, expressed by the venom gland.

It localises to the secreted. Functionally, probable ion channel inhibitor. The chain is Jingzhaotoxin F4-32.60 from Chilobrachys guangxiensis (Chinese earth tiger tarantula).